We begin with the raw amino-acid sequence, 314 residues long: Ribosomal RNA small subunit methyltransferase H (314 aa).

Residues 34-36, D53, F82, D103, and Q110 each bind S-adenosyl-L-methionine; that span reads GGH.

The protein belongs to the methyltransferase superfamily. RsmH family.

Its subcellular location is the cytoplasm. The enzyme catalyses cytidine(1402) in 16S rRNA + S-adenosyl-L-methionine = N(4)-methylcytidine(1402) in 16S rRNA + S-adenosyl-L-homocysteine + H(+). Specifically methylates the N4 position of cytidine in position 1402 (C1402) of 16S rRNA. The protein is Ribosomal RNA small subunit methyltransferase H of Levilactobacillus brevis (strain ATCC 367 / BCRC 12310 / CIP 105137 / JCM 1170 / LMG 11437 / NCIMB 947 / NCTC 947) (Lactobacillus brevis).